The chain runs to 786 residues: MTSIFHFAIIFMLILQIRIQLSEESEFLVDRSKNGLIHVPKDLSQKTTILNISQNYISELWTSDILSLSKLRILIISHNRIQYLDISVFKFNQELEYLDLSHNKLVKISCHPTVNLKHLDLSFNAFDALPICKEFGNMSQLKFLGLSTTHLEKSSVLPIAHLNISKVLLVLGETYGEKEDPEGLQDFNTESLHIVFPTNKEFHFILDVSVKTVANLELSNIKCVLEDNKCSYFLSILAKLQTNPKLSNLTLNNIETTWNSFIRILQLVWHTTVWYFSISNVKLQGQLDFRDFDYSGTSLKALSIHQVVSDVFGFPQSYIYEIFSNMNIKNFTVSGTRMVHMLCPSKISPFLHLDFSNNLLTDTVFENCGHLTELETLILQMNQLKELSKIAEMTTQMKSLQQLDISQNSVSYDEKKGDCSWTKSLLSLNMSSNILTDTIFRCLPPRIKVLDLHSNKIKSIPKQVVKLEALQELNVAFNSLTDLPGCGSFSSLSVLIIDHNSVSHPSADFFQSCQKMRSIKAGDNPFQCTCELGEFVKNIDQVSSEVLEGWPDSYKCDYPESYRGTLLKDFHMSELSCNITLLIVTIVATMLVLAVTVTSLCSYLDLPWYLRMVCQWTQTRRRARNIPLEELQRNLQFHAFISYSGHDSFWVKNELLPNLEKEGMQICLHERNFVPGKSIVENIITCIEKSYKSIFVLSPNFVQSEWCHYELYFAHHNLFHEGSNSLILILLEPIPQYSIPSSYHKLKSLMARRTYLEWPKEKSKRGLFWANLRAAINIKLTEQAKK.

The first 24 residues, 1-24, serve as a signal peptide directing secretion; that stretch reads MTSIFHFAIIFMLILQIRIQLSEE. The Extracellular segment spans residues 25–580; the sequence is SEFLVDRSKN…HMSELSCNIT (556 aa). Asn51 carries an N-linked (GlcNAc...) asparagine glycan. LRR repeat units follow at residues 54 to 77, 78 to 101, 102 to 125, 126 to 150, 151 to 175, 176 to 199, 200 to 223, 224 to 250, 251 to 278, 279 to 308, 309 to 337, 338 to 361, 362 to 388, 389 to 414, 415 to 437, 438 to 457, 458 to 478, 479 to 500, and 501 to 524; these read QNYI…LIIS, HNRI…LDLS, HNKL…SFNA, FDAL…STTH, LEKS…GETY, GEKE…FPTN, KEFH…NIKC, VLED…SNLT, LNNI…YFSI, SNVK…HQVV, SDVF…SGTR, MVHM…NLLT, DTVF…KELS, KIAE…SYDE, KKGD…ILTD, TIFR…SNKI, KSIP…VAFN, SLTD…IDHN, and SVSH…AGDN. A disulfide bridge connects residues Cys110 and Cys132. Asn137 and Asn163 each carry an N-linked (GlcNAc...) asparagine glycan. A disulfide bridge links Cys223 with Cys230. An interaction with bacterial lipopeptide region spans residues 313–316; it reads GFPQ. Asn330 carries an N-linked (GlcNAc...) asparagine glycan. Cys343 and Cys368 are joined by a disulfide. Cys419 and Cys442 form a disulfide bridge. An N-linked (GlcNAc...) asparagine glycan is attached at Asn429. One can recognise an LRRCT domain in the interval 525-579; sequence PFQCTCELGEFVKNIDQVSSEVLEGWPDSYKCDYPESYRGTLLKDFHMSELSCNI. The N-linked (GlcNAc...) asparagine glycan is linked to Asn578. The helical transmembrane segment at 581 to 601 threads the bilayer; it reads LLIVTIVATMLVLAVTVTSLC. Topologically, residues 602 to 786 are cytoplasmic; sequence SYLDLPWYLR…NIKLTEQAKK (185 aa). The region spanning 635-776 is the TIR domain; that stretch reads LQFHAFISYS…LFWANLRAAI (142 aa).

This sequence belongs to the Toll-like receptor family. As to quaternary structure, interacts (via extracellular domain) with TLR2. TLR2 seems to exist in heterodimers with either TLR1 or TLR6 before stimulation by the ligand. The heterodimers form bigger oligomers in response to their corresponding ligands as well as further heterotypic associations with other receptors such as CD14 and/or CD36. The activation cluster TLR2:TLR1:CD14 forms in response to triacylated lipopeptides. Binds MYD88 (via TIR domain). Interacts with CNPY3. Interacts with neutrophil recruitment protein from Aedes aegypti saliva; the interaction probably promotes activation of canonical NF-kappa-B signaling in skin-resident macrophages and subsequent expression of neutrophil chemoattractants. As to expression, ubiquitous. Highly expressed in spleen, ovary, peripheral blood leukocytes, thymus and small intestine.

Its subcellular location is the cell membrane. It is found in the cytoplasmic vesicle. The protein resides in the phagosome membrane. It localises to the membrane raft. The protein localises to the golgi apparatus. In terms of biological role, participates in the innate immune response to microbial agents. Specifically recognizes diacylated and triacylated lipopeptides. Cooperates with TLR2 to mediate the innate immune response to bacterial lipoproteins or lipopeptides. Forms the activation cluster TLR2:TLR1:CD14 in response to triacylated lipopeptides, this cluster triggers signaling from the cell surface and subsequently is targeted to the Golgi in a lipid-raft dependent pathway. Acts via MYD88 and TRAF6, leading to NF-kappa-B activation, cytokine secretion and the inflammatory response. The chain is Toll-like receptor 1 (TLR1) from Homo sapiens (Human).